Reading from the N-terminus, the 334-residue chain is Glucan endo-1,3-beta-glucosidase GII (334 aa).

Positions 1-28 are cleaved as a signal peptide; it reads MARKDVASMFAAALFIGAFAAVPTSVQS. Catalysis depends on Glu-122, which acts as the Proton donor. The active-site Nucleophile is the Glu-259.

This sequence belongs to the glycosyl hydrolase 17 family.

The catalysed reaction is Hydrolysis of (1-&gt;3)-beta-D-glucosidic linkages in (1-&gt;3)-beta-D-glucans.. May provide a degree of protection against microbial invasion of germinated barley grain through its ability to degrade fungal cell wall polysaccharides. Hydrolyzes laminarin in vitro. This Hordeum vulgare (Barley) protein is Glucan endo-1,3-beta-glucosidase GII.